The primary structure comprises 910 residues: Leucine--tRNA ligase (910 aa).

Residues 50-60 (PYTNGSLHVGH) carry the 'HIGH' region motif. Positions 611-615 (KISKS) match the 'KMSKS' region motif. Lys-614 contributes to the ATP binding site.

Belongs to the class-I aminoacyl-tRNA synthetase family.

Its subcellular location is the cytoplasm. It carries out the reaction tRNA(Leu) + L-leucine + ATP = L-leucyl-tRNA(Leu) + AMP + diphosphate. This is Leucine--tRNA ligase from Thermoplasma volcanium (strain ATCC 51530 / DSM 4299 / JCM 9571 / NBRC 15438 / GSS1).